Reading from the N-terminus, the 124-residue chain is Small ribosomal subunit protein uS12 (124 aa).

A 3-methylthioaspartic acid modification is found at Asp89.

Belongs to the universal ribosomal protein uS12 family. As to quaternary structure, part of the 30S ribosomal subunit. Contacts proteins S8 and S17. May interact with IF1 in the 30S initiation complex.

Its function is as follows. With S4 and S5 plays an important role in translational accuracy. Interacts with and stabilizes bases of the 16S rRNA that are involved in tRNA selection in the A site and with the mRNA backbone. Located at the interface of the 30S and 50S subunits, it traverses the body of the 30S subunit contacting proteins on the other side and probably holding the rRNA structure together. The combined cluster of proteins S8, S12 and S17 appears to hold together the shoulder and platform of the 30S subunit. In Erwinia amylovora (Fire blight bacteria), this protein is Small ribosomal subunit protein uS12.